Here is a 305-residue protein sequence, read N- to C-terminus: GMP synthase [glutamine-hydrolyzing] subunit B (305 aa).

Residues 2–185 (VEPTAFIDEK…LDLESIIAER (184 aa)) enclose the GMPS ATP-PPase domain. 29 to 35 (SGGVDSS) contributes to the ATP binding site.

In terms of assembly, heterodimer composed of a glutamine amidotransferase subunit (A) and a GMP-binding subunit (B).

It carries out the reaction XMP + L-glutamine + ATP + H2O = GMP + L-glutamate + AMP + diphosphate + 2 H(+). Its pathway is purine metabolism; GMP biosynthesis; GMP from XMP (L-Gln route): step 1/1. Catalyzes the synthesis of GMP from XMP. The polypeptide is GMP synthase [glutamine-hydrolyzing] subunit B (Natronomonas pharaonis (strain ATCC 35678 / DSM 2160 / CIP 103997 / JCM 8858 / NBRC 14720 / NCIMB 2260 / Gabara) (Halobacterium pharaonis)).